Consider the following 1163-residue polypeptide: Rho GTPase-activating protein 45 (1163 aa).

A disordered region spans residues 1–99; that stretch reads MFSRKKRELM…KRPTSLSRHA (99 aa). A phosphoserine mark is found at S23 and S25. Residues 55–65 are compositionally biased toward basic and acidic residues; that stretch reads LPKELPRKDGA. S100, S120, and S126 each carry phosphoserine. Disordered regions lie at residues 118 to 137, 262 to 282, and 454 to 475; these read HRSPLTAASPGELPTEGTGP, PPGDSSQSMESLYGSGSEGTP, and EEEQAGTAPGAGSTATKTLDKR. Residues 296–566 enclose the F-BAR domain; the sequence is EEVDVLLQRC…SSKLYDPGQQ (271 aa). Residues 403 to 526 adopt a coiled-coil conformation; it reads EHEKRRKEIK…QIQEVIRQSD (124 aa). Residues 458-470 are compositionally biased toward low complexity; sequence AGTAPGAGSTATK. Phosphoserine occurs at positions 596, 605, and 619. A disordered region spans residues 610-695; the sequence is DVAGPEAAGS…VDPEGGAGAS (86 aa). Basic residues predominate over residues 633-644; it reads KGHRAGRGHQVH. Position 646 is a phosphoserine (S646). The segment covering 673 to 682 has biased composition (low complexity); it reads TSSSGTMSST. Residues 729 to 774 form a Phorbol-ester/DAG-type zinc finger; that stretch reads THRLRKLRTPAKCRECNSYVYFQGAECEECCLACHKKCLETLAIQC. Positions 788–1001 constitute a Rho-GAP domain; sequence QDFSHAARSA…TLIVHYGLVF (214 aa). Phosphoserine occurs at positions 976, 1054, 1057, and 1059. Disordered regions lie at residues 1042-1067 and 1087-1163; these read AAEDGCRESRVVSNDSDSDLEEASEL and SEAS…PEFV. Residues 1087 to 1099 show a composition bias toward low complexity; that stretch reads SEASLEEASGSHS. Polar residues predominate over residues 1125–1137; that stretch reads SGFNTNQSNNVLQ.

Its subcellular location is the cytoplasm. It is found in the cell projection. The protein localises to the ruffle membrane. Its function is as follows. Contains a GTPase activator for the Rho-type GTPases (RhoGAP) domain that would be able to negatively regulate the actin cytoskeleton as well as cell spreading. However, also contains N-terminally a BAR-domin which is able to play an autoinhibitory effect on this RhoGAP activity. This is Rho GTPase-activating protein 45 from Pongo abelii (Sumatran orangutan).